Consider the following 69-residue polypeptide: Putative membrane protein insertion efficiency factor (69 aa).

It belongs to the UPF0161 family.

The protein resides in the cell membrane. Its function is as follows. Could be involved in insertion of integral membrane proteins into the membrane. This chain is Putative membrane protein insertion efficiency factor, found in Alkaliphilus oremlandii (strain OhILAs) (Clostridium oremlandii (strain OhILAs)).